A 249-amino-acid chain; its full sequence is Small ribosomal subunit protein eS6 (249 aa).

Residue Lys-14 forms a Glycyl lysine isopeptide (Lys-Gly) (interchain with G-Cter in SUMO2) linkage. Glu-35 carries the post-translational modification ADP-ribosyl glutamic acid. The residue at position 137 (Arg-137) is a (3R)-3-hydroxyarginine. Ser-148 is subject to Phosphoserine. Lys-211 is subject to N6-acetyllysine. Positions 217 to 229 are enriched in basic and acidic residues; that stretch reads MKEAKEKRQEQIA. The tract at residues 217–249 is disordered; it reads MKEAKEKRQEQIAKRRRLSSLRASTSKSESSQK. Ser-235, Ser-236, Ser-240, Ser-242, Ser-244, and Ser-247 each carry phosphoserine. Residues 236-249 are compositionally biased toward low complexity; sequence SLRASTSKSESSQK.

This sequence belongs to the eukaryotic ribosomal protein eS6 family. Component of the small ribosomal subunit. Part of the small subunit (SSU) processome, composed of more than 70 proteins and the RNA chaperone small nucleolar RNA (snoRNA) U3. Ribosomal protein S6 is the major substrate of protein kinases in eukaryote ribosomes. The phosphorylation is stimulated by growth factors, tumor promoting agents, and mitogens. It is dephosphorylated at growth arrest. Phosphorylated at Ser-235 and Ser-236 by RPS6KA1 and RPS6KA3; phosphorylation at these sites facilitates the assembly of the pre-initiation complex. Post-translationally, specifically hydroxylated (with R stereochemistry) at C-3 of Arg-137 by KDM8. In terms of processing, mono-ADP-ribosylation at Glu-35 by PARP16 inhibits polysome assembly and mRNA loading, thereby inhibiting protein translation.

It localises to the cytoplasm. The protein localises to the nucleus. It is found in the nucleolus. Component of the 40S small ribosomal subunit. Plays an important role in controlling cell growth and proliferation through the selective translation of particular classes of mRNA. Part of the small subunit (SSU) processome, first precursor of the small eukaryotic ribosomal subunit. During the assembly of the SSU processome in the nucleolus, many ribosome biogenesis factors, an RNA chaperone and ribosomal proteins associate with the nascent pre-rRNA and work in concert to generate RNA folding, modifications, rearrangements and cleavage as well as targeted degradation of pre-ribosomal RNA by the RNA exosome. This Oryctolagus cuniculus (Rabbit) protein is Small ribosomal subunit protein eS6 (RPS6).